Consider the following 164-residue polypeptide: Transcription antitermination protein NusB (164 aa).

The protein belongs to the NusB family.

Functionally, involved in transcription antitermination. Required for transcription of ribosomal RNA (rRNA) genes. Binds specifically to the boxA antiterminator sequence of the ribosomal RNA (rrn) operons. The chain is Transcription antitermination protein NusB from Mycolicibacterium gilvum (strain PYR-GCK) (Mycobacterium gilvum (strain PYR-GCK)).